A 293-amino-acid polypeptide reads, in one-letter code: Immediate early response gene 5-like protein (293 aa).

The protein belongs to the IER family.

In Xenopus laevis (African clawed frog), this protein is Immediate early response gene 5-like protein (ier5l).